The primary structure comprises 241 residues: Large ribosomal subunit protein uL3 (241 aa).

Positions 140-168 are disordered; it reads SHRSIGSTGGRQDPGKTFKNKKMPGHMGD. Q151 is modified (N5-methylglutamine).

Belongs to the universal ribosomal protein uL3 family. Part of the 50S ribosomal subunit. Forms a cluster with proteins L14 and L19. Post-translationally, methylated by PrmB.

One of the primary rRNA binding proteins, it binds directly near the 3'-end of the 23S rRNA, where it nucleates assembly of the 50S subunit. The sequence is that of Large ribosomal subunit protein uL3 from Azorhizobium caulinodans (strain ATCC 43989 / DSM 5975 / JCM 20966 / LMG 6465 / NBRC 14845 / NCIMB 13405 / ORS 571).